A 1512-amino-acid chain; its full sequence is ATP-dependent permease YOR1 (1512 aa).

Residues 1-68 are disordered; it reads MSPLLPTHWG…KGMKETEDGG (68 aa). Over residues 13-29 the composition is skewed to polar residues; it reads APQNEPTLPSPSHSVST. A compositionally biased stretch (basic and acidic residues) spans 31–65; that stretch reads VGDEEKLRRSEGSDGEDRINLDSNKYDVKGMKETE. Helical transmembrane passes span 229-249, 288-308, 363-385, 475-495, and 507-527; these read ASLAMSLLDVFGWFFMSAGFI, GPGIGAAIGLLLLLICSSLGM, FAAGFSHMLWTAPVQMIVIIIIL, GMTAIAMSLPILAAILSFITY, and IFTVITLFNLMRMPLMMWPMT. The region spanning 246–533 is the ABC transmembrane type-1 1 domain; that stretch reads AGFIKVFGDT…WPMTLSSTAD (288 aa). The segment at 594–656 is disordered; sequence VLNGGKPGGP…SAPGIDEEIS (63 aa). Residues 619–643 show a composition bias toward low complexity; the sequence is AEEIQAETAAGQPGAGEASAEGQGQ. Positions 651-871 constitute an ABC transporter 1 domain; the sequence is IDEEISEKKE…NGAFAKLIKE (221 aa). Position 683–690 (683–690) interacts with ATP; the sequence is GAIGSGKS. A run of 4 helical transmembrane segments spans residues 937-957, 974-994, 1067-1087, and 1167-1187; these read GVFMLPLLFFCIVVAQSFYVI, NGFYMGIYAGLGVGLAIALFF, VILLAIIEPYFLIAMAVVSLL, and FLGSLLSFSVAIIVVCSSSVS. The ABC transmembrane type-1 2 domain occupies 943 to 1217; that stretch reads LLFFCIVVAQ…LVRQIAEVEN (275 aa). The region spanning 1255–1496 is the ABC transporter 2 domain; the sequence is IEFKDVRMRY…GGIFTEMCSK (242 aa). Residue 1289–1296 coordinates ATP; that stretch reads GRTGAGKS.

This sequence belongs to the ABC transporter superfamily. ABCC family. Conjugate transporter (TC 3.A.1.208) subfamily.

The protein localises to the extracellular vesicle membrane. The protein resides in the secreted. Its function is as follows. Transmembrane transporter. May play a role in the packaging or formation of extracellular vesicles (EVs), and in the export of virulence factors from EVs. Required for efficient non-lytic exocytosis from host macrophages, the process by which the yeast escapes host macrophages with both host cell and pathogen remaining viable. This Cryptococcus neoformans var. grubii serotype A (strain H99 / ATCC 208821 / CBS 10515 / FGSC 9487) (Filobasidiella neoformans var. grubii) protein is ATP-dependent permease YOR1.